Reading from the N-terminus, the 272-residue chain is MIGKEENKFISFIKKNKFFASRKMGQNFLINENIKKKIVDSLEIKPDDHVLEIGPGFGALTKIVLSQTKNLTVVELDKRLVEFLKQEYKELRIINIDVLKFDFKEFNKDTQYKIISNLPYSISSKIIFKILKYANFSQSVLMVQKEMADRITAKVGTKKYNNFTVLLRITSEIKKLFDVSNNCFFPKPEVDSTVISFERKKDFDFTNFEKLESFLLKCFSQKRKTIFNNLKNYFPKQKIEEVFNKHSIIPTTRPENIKEELYLKMCFDFYDL.

S-adenosyl-L-methionine-binding residues include N27, L29, G54, E75, D97, and N117.

This sequence belongs to the class I-like SAM-binding methyltransferase superfamily. rRNA adenine N(6)-methyltransferase family. RsmA subfamily.

The protein localises to the cytoplasm. It carries out the reaction adenosine(1518)/adenosine(1519) in 16S rRNA + 4 S-adenosyl-L-methionine = N(6)-dimethyladenosine(1518)/N(6)-dimethyladenosine(1519) in 16S rRNA + 4 S-adenosyl-L-homocysteine + 4 H(+). Its function is as follows. Specifically dimethylates two adjacent adenosines (A1518 and A1519) in the loop of a conserved hairpin near the 3'-end of 16S rRNA in the 30S particle. May play a critical role in biogenesis of 30S subunits. The sequence is that of Ribosomal RNA small subunit methyltransferase A from Malacoplasma penetrans (strain HF-2) (Mycoplasma penetrans).